The sequence spans 336 residues: Biotin synthase (336 aa).

The Radical SAM core domain maps to Thr-36–Arg-263. Cys-51, Cys-55, and Cys-58 together coordinate [4Fe-4S] cluster. The [2Fe-2S] cluster site is built by Cys-95, Cys-126, Cys-186, and Arg-258.

The protein belongs to the radical SAM superfamily. Biotin synthase family. Homodimer. [4Fe-4S] cluster serves as cofactor. It depends on [2Fe-2S] cluster as a cofactor.

It carries out the reaction (4R,5S)-dethiobiotin + (sulfur carrier)-SH + 2 reduced [2Fe-2S]-[ferredoxin] + 2 S-adenosyl-L-methionine = (sulfur carrier)-H + biotin + 2 5'-deoxyadenosine + 2 L-methionine + 2 oxidized [2Fe-2S]-[ferredoxin]. It functions in the pathway cofactor biosynthesis; biotin biosynthesis; biotin from 7,8-diaminononanoate: step 2/2. Its function is as follows. Catalyzes the conversion of dethiobiotin (DTB) to biotin by the insertion of a sulfur atom into dethiobiotin via a radical-based mechanism. The sequence is that of Biotin synthase from Gluconobacter oxydans (strain 621H) (Gluconobacter suboxydans).